A 217-amino-acid chain; its full sequence is Lipoprotein CseA (217 aa).

A signal peptide spans 1-34 (MRGLGTESLRARGALKAAIAAVAGLAVLGLSVSA). C35 carries N-palmitoyl cysteine lipidation. The S-diacylglycerol cysteine moiety is linked to residue C35. Disordered regions lie at residues 39 to 66 (GTGARDEGPAGSDSVAAGAATPTVSPSK) and 192 to 217 (FSEESRTHTEYSNAVGGTDSATPAPN).

The protein resides in the cell membrane. In terms of biological role, may be involved in the stabilization of the cell envelope or may interact with the sensor protein CseC to modulate its activity, in response to cell envelope stress. This Streptomyces avermitilis (strain ATCC 31267 / DSM 46492 / JCM 5070 / NBRC 14893 / NCIMB 12804 / NRRL 8165 / MA-4680) protein is Lipoprotein CseA (cseA).